A 571-amino-acid polypeptide reads, in one-letter code: Putative pyruvate decarboxylase C13A11.06 (571 aa).

2 residues coordinate pyruvate: Asp29 and His118. Thiamine diphosphate contacts are provided by residues Thr395 and 418-420 (GSI). Residue Asp450 participates in Mg(2+) binding. Residues 451-452 (GS) and 477-482 (NDGYTI) contribute to the thiamine diphosphate site. Mg(2+) contacts are provided by Asn477 and Gly479. Glu483 lines the pyruvate pocket.

This sequence belongs to the TPP enzyme family. Homotetramer. It depends on Mg(2+) as a cofactor. Thiamine diphosphate serves as cofactor.

The catalysed reaction is a 2-oxocarboxylate + H(+) = an aldehyde + CO2. It carries out the reaction pyruvate + H(+) = acetaldehyde + CO2. This chain is Putative pyruvate decarboxylase C13A11.06, found in Schizosaccharomyces pombe (strain 972 / ATCC 24843) (Fission yeast).